A 300-amino-acid polypeptide reads, in one-letter code: MTDTPDPAAVLSPAVKAAVLSEALPYIRRFHGKTIVVKYGGNAMTEERLQRSFAHDVVLLKLVGLNPVVVHGGGPQIDDALRRIGKQGTFVQGMRVTDAETMEVVEWVLGGQVQQDIVMMINEVGGKAVGLTGKDGMLIQATKKLMVNKDDPSQPLDIGLVGDITRVEPAVVKALQDDQFIPVISPIGYGEDGTAYNINADVVAGKMAEVLGAEKLLMMTNTPGVLDKGGKLLRSLSAQTIDELFADGTISGGMLPKISSSLDAAKNGVNSVHIVDGRVPHCLLLEILTDQGVGTMISSH.

Substrate is bound by residues 73–74 (GG), arginine 95, and asparagine 197.

The protein belongs to the acetylglutamate kinase family. ArgB subfamily.

Its subcellular location is the cytoplasm. The catalysed reaction is N-acetyl-L-glutamate + ATP = N-acetyl-L-glutamyl 5-phosphate + ADP. Its pathway is amino-acid biosynthesis; L-arginine biosynthesis; N(2)-acetyl-L-ornithine from L-glutamate: step 2/4. Its function is as follows. Catalyzes the ATP-dependent phosphorylation of N-acetyl-L-glutamate. The chain is Acetylglutamate kinase from Bordetella pertussis (strain Tohama I / ATCC BAA-589 / NCTC 13251).